Here is a 730-residue protein sequence, read N- to C-terminus: PWWP domain-containing protein 2A (730 aa).

The segment covering 1–15 (MAAVAAEAAATAASP) has biased composition (low complexity). Residues 1 to 134 (MAAVAAEAAA…PPAGGDSAVS (134 aa)) are disordered. Over residues 66–77 (PLPPPPPPPPPG) the composition is skewed to pro residues. Residues Ser82 and Ser99 each carry the phosphoserine modification. A compositionally biased stretch (pro residues) spans 91–108 (PEPAAVPVSPPEQPPAAP). Positions 128 to 346 (GGDSAVSHLI…KLKTDHKVDG (219 aa)) are interaction with HDAC1 and MTA1. Lys188 is covalently cross-linked (Glycyl lysine isopeptide (Lys-Gly) (interchain with G-Cter in SUMO2)). Disordered stretches follow at residues 257–276 (YNQSIPQPPPRKIKRPKRKM), 311–355 (IRKG…SQRR), and 409–531 (KEKA…LGKK). Positions 267-276 (RKIKRPKRKM) are enriched in basic residues. Basic and acidic residues-rich tracts occupy residues 311–329 (IRKGSSDSSRYEDKKRRND) and 341–354 (DHKVDGKNQNESQR). Residues 396–547 (MDHAKAREVL…SVYLTLNQET (152 aa)) are interaction with the H2A.Z/H2AZ1. The span at 488-501 (SAGEAPSEKPSPSE) shows a compositional bias: low complexity. Basic and acidic residues predominate over residues 512–527 (DTSRVRVPGEQEELRM). A PWWP domain is found at 630–690 (VGDIVWAKIY…LSQLSPFLEN (61 aa)).

In terms of assembly, component of a MTA1-specific subcomplex of the NuRD complex (M1HR), which is composed of PWWP2A, MTA1/2, HDAC1/2, and RBBP4/7 but does not contain CHD4 and MBD3. Interacts with MTA1; the interaction mediates the association of PWWP2A with the M1HR complex. Interacts with H2A.Z/H2AZ1. Interacts (via PWWP domain) with histone H3 trimethylated at 'Lys-36' (H3K36me3). Does not interact with CHD4 and MBD3.

It localises to the nucleus. Chromatin-binding protein that acts as an adapter between distinct nucleosome components (H3K36me3 or H2A.Z) and chromatin-modifying complexes, contributing to the regulation of the levels of histone acetylation at actively transcribed genes. Competes with CHD4 and MBD3 for interaction with MTA1 to form a NuRD subcomplex, preventing the formation of full NuRD complex (containing CHD4 and MBD3), leading to recruitment of HDACs to gene promoters resulting in turn in the deacetylation of nearby H3K27 and H2A.Z. Plays a role in facilitating transcriptional elongation and repression of spurious transcription initiation through regulation of histone acetylation. Essential for proper mitosis progression. In Mus musculus (Mouse), this protein is PWWP domain-containing protein 2A (Pwwp2a).